Reading from the N-terminus, the 177-residue chain is Large ribosomal subunit protein uL6 (177 aa).

This sequence belongs to the universal ribosomal protein uL6 family. In terms of assembly, part of the 50S ribosomal subunit.

This protein binds to the 23S rRNA, and is important in its secondary structure. It is located near the subunit interface in the base of the L7/L12 stalk, and near the tRNA binding site of the peptidyltransferase center. The chain is Large ribosomal subunit protein uL6 from Delftia acidovorans (strain DSM 14801 / SPH-1).